We begin with the raw amino-acid sequence, 200 residues long: Holliday junction branch migration complex subunit RuvA (200 aa).

Positions 1–63 (MIASVRGEVL…EDSMTLYGFP (63 aa)) are domain I. Positions 64 to 142 (DSESKELFGL…AVGSTSGAVP (79 aa)) are domain II. A flexible linker region spans residues 142–146 (PLGAG). The domain III stretch occupies residues 147–200 (GGGSVRDQIVEALVGLGFPAKQAEQATDSVLAEAPESTTSSALRSALSLLGKTR).

This sequence belongs to the RuvA family. As to quaternary structure, homotetramer. Forms an RuvA(8)-RuvB(12)-Holliday junction (HJ) complex. HJ DNA is sandwiched between 2 RuvA tetramers; dsDNA enters through RuvA and exits via RuvB. An RuvB hexamer assembles on each DNA strand where it exits the tetramer. Each RuvB hexamer is contacted by two RuvA subunits (via domain III) on 2 adjacent RuvB subunits; this complex drives branch migration. In the full resolvosome a probable DNA-RuvA(4)-RuvB(12)-RuvC(2) complex forms which resolves the HJ.

It localises to the cytoplasm. Functionally, the RuvA-RuvB-RuvC complex processes Holliday junction (HJ) DNA during genetic recombination and DNA repair, while the RuvA-RuvB complex plays an important role in the rescue of blocked DNA replication forks via replication fork reversal (RFR). RuvA specifically binds to HJ cruciform DNA, conferring on it an open structure. The RuvB hexamer acts as an ATP-dependent pump, pulling dsDNA into and through the RuvAB complex. HJ branch migration allows RuvC to scan DNA until it finds its consensus sequence, where it cleaves and resolves the cruciform DNA. The protein is Holliday junction branch migration complex subunit RuvA of Rhodococcus opacus (strain B4).